We begin with the raw amino-acid sequence, 491 residues long: Nucleoside transporter 1.2 (491 aa).

Helical transmembrane passes span 27-47 (FYVYVVAFMCGVSMMMSVNAV), 82-102 (YNLIGIVTSLIMEPLTLLSWF), 109-129 (VRLLGGLVILIVEIIVLMVVP), 136-156 (AGAVATICCTGFIGGFGKSIF), 173-193 (STMMGGVGMSGVLTSLLQIIV), and 209-229 (KIYYGLDVGIQGMTFVALILL). Residues 261-273 (HTDEHPTHDKEGR) show a composition bias toward basic and acidic residues. Disordered regions lie at residues 261-280 (HTDEHPTHDKEGRNSSSGKE) and 290-309 (AAAKSEGPDAVEESSWPHEV). Residue N274 is glycosylated (N-linked (GlcNAc...) asparagine). The next 5 membrane-spanning stretches (helical) occupy residues 333-353 (MFVACAFNFLITLFLFPGIAV), 361-381 (WFSTIAVFIFNVFDVLGRFSP), 395-415 (WIIVAASFARVIFVPLLLLHS), 427-447 (VMEVIFGFSNGYVGSMALVLG), and 460-480 (FVAGTLMGISILVGGTIGTVL).

Belongs to the SLC29A/ENT transporter (TC 2.A.57) family.

Its subcellular location is the membrane. It carries out the reaction adenosine(in) + H(+)(in) = adenosine(out) + H(+)(out). It catalyses the reaction uridine(in) + H(+)(in) = uridine(out) + H(+)(out). Sodium-independent nucleoside:H(+) symporter; transports adenosine with high affinity and uridine with moderate affinity. Can transport cytidine and thymidine. The chain is Nucleoside transporter 1.2 from Leishmania donovani.